A 99-amino-acid chain; its full sequence is Plastocyanin (99 aa).

Positions 1-99 (IEIKLGGDDG…AGMVGKVTVQ (99 aa)) constitute a Plastocyanin-like domain. The Cu cation site is built by histidine 37, cysteine 84, histidine 87, and methionine 92.

It belongs to the plastocyanin family. It depends on Cu(2+) as a cofactor.

The protein localises to the plastid. Its subcellular location is the chloroplast thylakoid membrane. Its function is as follows. Participates in electron transfer between P700 and the cytochrome b6-f complex in photosystem I. The sequence is that of Plastocyanin (PETE) from Rumex obtusifolius (Bitter dock).